The following is a 231-amino-acid chain: Phosphatidylserine decarboxylase proenzyme (231 aa).

Catalysis depends on Ser188, which acts as the Schiff-base intermediate with substrate; via pyruvic acid. Pyruvic acid (Ser); by autocatalysis is present on Ser188.

It belongs to the phosphatidylserine decarboxylase family. PSD-A subfamily. As to quaternary structure, heterodimer of a large membrane-associated beta subunit and a small pyruvoyl-containing alpha subunit. It depends on pyruvate as a cofactor. Is synthesized initially as an inactive proenzyme. Formation of the active enzyme involves a self-maturation process in which the active site pyruvoyl group is generated from an internal serine residue via an autocatalytic post-translational modification. Two non-identical subunits are generated from the proenzyme in this reaction, and the pyruvate is formed at the N-terminus of the alpha chain, which is derived from the carboxyl end of the proenzyme. The post-translation cleavage follows an unusual pathway, termed non-hydrolytic serinolysis, in which the side chain hydroxyl group of the serine supplies its oxygen atom to form the C-terminus of the beta chain, while the remainder of the serine residue undergoes an oxidative deamination to produce ammonia and the pyruvoyl prosthetic group on the alpha chain.

Its subcellular location is the cell membrane. It catalyses the reaction a 1,2-diacyl-sn-glycero-3-phospho-L-serine + H(+) = a 1,2-diacyl-sn-glycero-3-phosphoethanolamine + CO2. Its pathway is phospholipid metabolism; phosphatidylethanolamine biosynthesis; phosphatidylethanolamine from CDP-diacylglycerol: step 2/2. In terms of biological role, catalyzes the formation of phosphatidylethanolamine (PtdEtn) from phosphatidylserine (PtdSer). In Rickettsia prowazekii (strain Madrid E), this protein is Phosphatidylserine decarboxylase proenzyme.